The following is a 230-amino-acid chain: UPF0758 protein ABC2615 (230 aa).

The MPN domain maps to valine 104 to phenylalanine 226. Residues histidine 175, histidine 177, and aspartate 188 each coordinate Zn(2+). Residues histidine 175–aspartate 188 carry the JAMM motif motif.

It belongs to the UPF0758 family.

The protein is UPF0758 protein ABC2615 of Shouchella clausii (strain KSM-K16) (Alkalihalobacillus clausii).